Reading from the N-terminus, the 901-residue chain is MSHEWLISASETMRSIGNGEGLRDKGAVVANNDGEFNEGDTNREEDSSTIFSFDFDEEIVMCIDFSGGKLGCSILDYHTKTLKAFDQDYVVNKTTISSHDLIDDADMSSNDISLLLGLLIMEANPTVCLVPARLEDWIFDYIKTKCDEINCRLELQPIKRFKKWDLLQSLQLRGHDNQTILNDILSNSKFTTTVTLGTVGCILANHEQLGEYNDSTASSNMVTGRLVQNAFEDVIHGIRYIDIRDRMVLDENTISALHIFPTAHKLGHDKMMRNGFFSVFELFNQVSSDYARRILKSWLINPLTNKKRIETRYSIIRTLLDKQNAIIFSDLSQSIKRCPDAFGFINQLRSGKSTLGTWSKVASFLEKGIAIFQLVSSLKLGSDEANILHDIKNKVDISALKECLRKVETVIDFDTSRDTKTLTINTGVDNRLDECRNIYNHLEGILLDVARETQIFLLNTMPQEDCKTTKSLEKLVNAVYIPQLGYLVTISVLMEPLLDGIPNLQWEEIFRSSENIYFKNGRVLELDETYGDIYGAISDFEIEILFSLQEQILRRKTQLTAYNILLSELEILLSFAQVSAERNYAEPQLVEDECILEIINGRHALYETFLDNYIPNSTMIDGGLFSELSWCEQNKGRIIVVTGANASGKSVYLTQNGLIVYLAQIGCFVPAERARIGIADKILTRIRTQETVYKTQSSFLLDSQQMAKSLSLATEKSLILIDEYGKGTDILDGPSLFGSIMLNMSKSEKCPRIIACTHFHELFNENVLTENIKGIKHYCTDILISQKYNLLETAHVGEDHESEGITFLFKVKEGISKQSFGIYCAKVCGLSRDIVERAEELSRMINRGDDVVQQCGNLTEKEMREFQKNQEIVKKFLSWDLDLETTTTSENLRLKLKNFLR.

643-650 (GANASGKS) contacts ATP.

Belongs to the DNA mismatch repair MutS family. In terms of assembly, heterooligomer of MSH4 and MSH5.

Functionally, involved in meiotic recombination. Facilitate crossovers between homologs during meiosis. This chain is MutS protein homolog 5 (MSH5), found in Saccharomyces cerevisiae (strain ATCC 204508 / S288c) (Baker's yeast).